The sequence spans 150 residues: 3-dehydroquinate dehydratase (150 aa).

Tyr-26 acts as the Proton acceptor in catalysis. Substrate contacts are provided by Asn-77, His-83, and Asp-90. His-103 functions as the Proton donor in the catalytic mechanism. Residues 104–105 (LS) and Arg-114 contribute to the substrate site.

Belongs to the type-II 3-dehydroquinase family. Homododecamer.

It carries out the reaction 3-dehydroquinate = 3-dehydroshikimate + H2O. It participates in metabolic intermediate biosynthesis; chorismate biosynthesis; chorismate from D-erythrose 4-phosphate and phosphoenolpyruvate: step 3/7. Its function is as follows. Catalyzes a trans-dehydration via an enolate intermediate. In Mannheimia succiniciproducens (strain KCTC 0769BP / MBEL55E), this protein is 3-dehydroquinate dehydratase.